The sequence spans 459 residues: Bifunctional protein GlmU (459 aa).

A pyrophosphorylase region spans residues 1–229 (MTNYAIILAA…FDESLGVNDR (229 aa)). Residues 8-11 (LAAG), Lys-22, Gln-72, and 77-78 (GT) each bind UDP-N-acetyl-alpha-D-glucosamine. Mg(2+) is bound at residue Asp-102. The UDP-N-acetyl-alpha-D-glucosamine site is built by Gly-139, Glu-154, Asn-169, and Asn-227. Position 227 (Asn-227) interacts with Mg(2+). The tract at residues 230–250 (VALATAESVMRRRINQQHMVN) is linker. Positions 251-459 (GVSFVNPHAT…KRLPHHPQNK (209 aa)) are N-acetyltransferase. UDP-N-acetyl-alpha-D-glucosamine contacts are provided by Arg-332 and Lys-350. His-362 acts as the Proton acceptor in catalysis. Residues Tyr-365 and Asn-376 each contribute to the UDP-N-acetyl-alpha-D-glucosamine site. Residues Ala-379, 385 to 386 (NY), Ser-404, Ala-422, and Arg-439 each bind acetyl-CoA.

In the N-terminal section; belongs to the N-acetylglucosamine-1-phosphate uridyltransferase family. This sequence in the C-terminal section; belongs to the transferase hexapeptide repeat family. Homotrimer. The cofactor is Mg(2+).

It is found in the cytoplasm. The catalysed reaction is alpha-D-glucosamine 1-phosphate + acetyl-CoA = N-acetyl-alpha-D-glucosamine 1-phosphate + CoA + H(+). It catalyses the reaction N-acetyl-alpha-D-glucosamine 1-phosphate + UTP + H(+) = UDP-N-acetyl-alpha-D-glucosamine + diphosphate. Its pathway is nucleotide-sugar biosynthesis; UDP-N-acetyl-alpha-D-glucosamine biosynthesis; N-acetyl-alpha-D-glucosamine 1-phosphate from alpha-D-glucosamine 6-phosphate (route II): step 2/2. It participates in nucleotide-sugar biosynthesis; UDP-N-acetyl-alpha-D-glucosamine biosynthesis; UDP-N-acetyl-alpha-D-glucosamine from N-acetyl-alpha-D-glucosamine 1-phosphate: step 1/1. It functions in the pathway bacterial outer membrane biogenesis; LPS lipid A biosynthesis. Its function is as follows. Catalyzes the last two sequential reactions in the de novo biosynthetic pathway for UDP-N-acetylglucosamine (UDP-GlcNAc). The C-terminal domain catalyzes the transfer of acetyl group from acetyl coenzyme A to glucosamine-1-phosphate (GlcN-1-P) to produce N-acetylglucosamine-1-phosphate (GlcNAc-1-P), which is converted into UDP-GlcNAc by the transfer of uridine 5-monophosphate (from uridine 5-triphosphate), a reaction catalyzed by the N-terminal domain. The sequence is that of Bifunctional protein GlmU from Streptococcus sanguinis (strain SK36).